The sequence spans 60 residues: Prophage outer membrane lipoprotein RzoD (60 aa).

The first 19 residues, 1 to 19 (MRKLKMMLCVMMLPLVVVG), serve as a signal peptide directing secretion. The N-palmitoyl cysteine moiety is linked to residue cysteine 20. Residue cysteine 20 is the site of S-diacylglycerol cysteine attachment.

It belongs to the lambdalikevirus o-spanin family. In terms of assembly, homodimer; disulfide-linked. Interacts (via C-terminus) with RZ (via C-terminus). Part of the spanin complex which spans the entire periplasmic space. The spanin complex is composed of spanin, inner membrane subunit and spanin, outer membrane subunit.

It is found in the cell outer membrane. Component of the spanin complex that disrupts the outer membrane and causes cell lysis during virus exit. The spanin complex conducts the final step in cell lysis by disrupting the outer membrane after holin and endolysin action have permeabilized the inner membrane and degraded the host peptidoglycans. This Escherichia coli (strain K12) protein is Prophage outer membrane lipoprotein RzoD (rzoD).